Here is a 250-residue protein sequence, read N- to C-terminus: MRKSIVAGNWKMHKNAAQTEELLNELIAKIPAKTNAQVIVAPTFVNLQAAAAKLKNTTIGVSAQNVHQAEGGAFTGEISADMLTSIGVNTVILGHSERRAIFHETDALIANKVDTALKHDMTVIFCFGEELKDRQSGNHFNIVENQLRDGVFHIAKESWSKIVLAYEPVWAIGTGETASPEQAQEMHEFIRETIRKAFGAEIADEVSILYGGSVKPENAKEIFSKPDVDGGLIGGAALKADDFLAIVTAI.

Position 9–11 (9–11 (NWK)) interacts with substrate. The active-site Electrophile is the histidine 95. The active-site Proton acceptor is the glutamate 167. Substrate-binding positions include glycine 173, serine 213, and 234 to 235 (GG).

This sequence belongs to the triosephosphate isomerase family. In terms of assembly, homodimer.

Its subcellular location is the cytoplasm. It carries out the reaction D-glyceraldehyde 3-phosphate = dihydroxyacetone phosphate. It participates in carbohydrate biosynthesis; gluconeogenesis. The protein operates within carbohydrate degradation; glycolysis; D-glyceraldehyde 3-phosphate from glycerone phosphate: step 1/1. Its function is as follows. Involved in the gluconeogenesis. Catalyzes stereospecifically the conversion of dihydroxyacetone phosphate (DHAP) to D-glyceraldehyde-3-phosphate (G3P). The polypeptide is Triosephosphate isomerase (Flavobacterium johnsoniae (strain ATCC 17061 / DSM 2064 / JCM 8514 / BCRC 14874 / CCUG 350202 / NBRC 14942 / NCIMB 11054 / UW101) (Cytophaga johnsonae)).